Reading from the N-terminus, the 823-residue chain is Adhesion G protein-coupled receptor E2 (823 aa).

A signal peptide spans 1–23 (MGGRVFLVFLAFCVWLTLPGAET). Residues 24-540 (QDSRGCARWC…EEDPVLTVIT (517 aa)) are Extracellular-facing. Residues 25-66 (DSRGCARWCPQDSSCVNATACRCNPGFSSFSEIITTPMETCD) enclose the EGF-like 1 domain. Intrachain disulfides connect C29-C39, C33-C45, C47-C65, C71-C85, C79-C94, C96-C117, C123-C136, C130-C145, C147-C161, C167-C180, C174-C189, C191-C210, C216-C229, C223-C238, and C240-C259. N-linked (GlcNAc...) asparagine glycosylation occurs at N41. Positions 67-118 (DINECATLSKVSCGKFSDCWNTEGSYDCVCSPGYEPVSGAKTFKNESENTCQ) constitute an EGF-like 2; calcium-binding domain. N-linked (GlcNAc...) asparagine glycosylation is present at N111. Positions 119–162 (DVDECQQNPRLCKSYGTCVNTLGSYTCQCLPGFKLKPEDPKLCT) constitute an EGF-like 3; calcium-binding domain. The region spanning 163–211 (DVNECTSGQNPCHSSTHCLNNVGSYQCRCRPGWQPIPGSPNGPNNTVCE) is the EGF-like 4; calcium-binding domain. N206 is a glycosylation site (N-linked (GlcNAc...) asparagine). The EGF-like 5; calcium-binding domain occupies 212-260 (DVDECSSGQHQCDSSTVCFNTVGSYSCRCRPGWKPRHGIPNNQKDTVCE). Residues N298, N347, N354, N456, and N460 are each glycosylated (N-linked (GlcNAc...) asparagine). The 177-residue stretch at 354 to 530 (NFSYPAGTEL…AVLMAHYDVQ (177 aa)) folds into the GAIN-B domain. Disulfide bonds link C482/C512 and C500/C514. The GPS stretch occupies residues 482 to 530 (CVFWEHGQNGCGHWATTGCSTIGTRDTSTICRCTHLSSFAVLMAHYDVQ). A helical membrane pass occupies residues 541-561 (YMGLSVSLLCLLLAALTFLLC). At 562-569 (KAIQNTST) the chain is on the cytoplasmic side. A helical transmembrane segment spans residues 570 to 590 (SLHLQLSLCLFLAHLLFLVAI). At 591–605 (DQTGHKVLCSIIAGT) the chain is on the extracellular side. Residues 606–626 (LHYLYLATLTWMLLEALYLFL) form a helical membrane-spanning segment. The Cytoplasmic segment spans residues 627-644 (TARNLTVVNYSSINRFMK). The helical transmembrane segment at 645-665 (KLMFPVGYGVPAVTVAISAAS) threads the bilayer. Topologically, residues 666 to 683 (RPHLYGTPSRCWLQPEKG) are extracellular. The helical transmembrane segment at 684-704 (FIWGFLGPVCAIFSVNLVLFL) threads the bilayer. Topologically, residues 705–735 (VTLWILKNRLSSLNSEVSTLRNTRMLAFKAT) are cytoplasmic. The chain crosses the membrane as a helical span at residues 736 to 756 (AQLFILGCTWCLGILQVGPAA). Topologically, residues 757 to 760 (RVMA) are extracellular. The chain crosses the membrane as a helical span at residues 761–781 (YLFTIINSLQGVFIFLVYCLL). At 782 to 823 (SQQVREQYGKWSKGIRKLKTESEMHTLSSSAKADTSKPSTVN) the chain is on the cytoplasmic side.

It belongs to the G-protein coupled receptor 2 family. Adhesion G-protein coupled receptor (ADGR) subfamily. As to quaternary structure, forms a heterodimer, consisting of a large extracellular region non-covalently linked to a seven-transmembrane moiety. Interacts with chondroitin sulfate; the interaction with chondroitin sulfate is calcium-dependent. Interacts with CD55. Autoproteolytically cleaved into 2 subunits, an extracellular alpha subunit and a seven-transmembrane beta subunit. As to expression, expression is restricted to myeloid cells. Highest expression was found in peripheral blood leukocytes, followed by spleen and lymph nodes, with intermediate to low levels in thymus, bone marrow, fetal liver, placenta, and lung, and no expression in heart, brain, skeletal muscle, kidney, or pancreas. Expression is also detected in monocyte/macrophage and Jurkat cell lines but not in other cell lines tested. High expression in mast cells.

Its subcellular location is the cell membrane. It localises to the cell projection. It is found in the ruffle membrane. Functionally, cell surface receptor that binds to the chondroitin sulfate moiety of glycosaminoglycan chains and promotes cell attachment. Promotes granulocyte chemotaxis, degranulation and adhesion. In macrophages, promotes the release of inflammatory cytokines, including IL8 and TNF. Signals probably through G-proteins. Is a regulator of mast cell degranulation. This Homo sapiens (Human) protein is Adhesion G protein-coupled receptor E2.